We begin with the raw amino-acid sequence, 788 residues long: Probable potassium transporter 9 (788 aa).

The Cytoplasmic segment spans residues 1–21 (MDPEFGRGMAPRKREPWRTTL). Residues 22-42 (LLAYQSLGVVYGDLSISPLYV) form a helical membrane-spanning segment. The Extracellular segment spans residues 43-59 (YKSTFAEDITHSESNEE). The chain crosses the membrane as a helical span at residues 60–80 (IFGVLSFVFWTLTLIPLIKYV). Topologically, residues 81–151 (SIVLRADDNG…EKHKTLQTAL (71 aa)) are cytoplasmic. Residues 152-172 (LIMVMIGTCMVIGDGVLTPAI) form a helical membrane-spanning segment. Topologically, residues 173–191 (SVFSAVSGLELSLSRDQHE) are extracellular. Residues 192–212 (YAVIPITCVILVFLFALQHYG) form a helical membrane-spanning segment. Residues 213–215 (THR) are Cytoplasmic-facing. A helical transmembrane segment spans residues 216 to 236 (VGFLFAPIVLAWLICMSMLGL). At 237–264 (YNIIHWNPQVYRALNPYYMLKFLRKTKK) the chain is on the extracellular side. Residues 265–285 (SGWMSLGGILLCMTGSEAMFA) traverse the membrane as a helical segment. Over 286–292 (DLGHFSY) the chain is Cytoplasmic. Residues 293–313 (SAIQLAFTTLVYPALILGYMG) traverse the membrane as a helical segment. At 314–343 (QAAYLSKHHTLNSTYQIGYYISVPESVRWP) the chain is on the extracellular side. Asn-325 carries N-linked (GlcNAc...) asparagine glycosylation. Residues 344–364 (VLVLAILASVVGSQAIISGTF) form a helical membrane-spanning segment. At 365–391 (SIINQSQSLSCFPRVKVVHTSENIHGQ) the chain is on the cytoplasmic side. A helical transmembrane segment spans residues 392–412 (IYIPEINWLLMVLCIAVTVGF). Topologically, residues 413 to 422 (RDTKHMGNAS) are extracellular. Asn-420 is a glycosylation site (N-linked (GlcNAc...) asparagine). The helical transmembrane segment at 423–443 (GLAVITVMLVTTCLTSLVIML) threads the bilayer. Over 444 to 451 (CWHRSPAL) the chain is Cytoplasmic. The chain crosses the membrane as a helical span at residues 452 to 472 (ALVFFLFFGSIEVLYFSASLI). The Extracellular portion of the chain corresponds to 473 to 476 (KFRE). The helical transmembrane segment at 477–497 (GAWLPIMLALILMAVMFIWHH) threads the bilayer. Residues 498–788 (TTIKKYEFDL…LLEVGMVYVL (291 aa)) are Cytoplasmic-facing.

Belongs to the HAK/KUP transporter (TC 2.A.72.3) family.

The protein resides in the membrane. Functionally, high-affinity potassium transporter. The chain is Probable potassium transporter 9 (HAK9) from Oryza sativa subsp. japonica (Rice).